The following is a 316-amino-acid chain: Large ribosomal subunit protein uL10 (316 aa).

A disordered region spans residues 289-316; sequence AAAAAPAKEAPKEESEESDEDMGFGLFD.

The protein belongs to the universal ribosomal protein uL10 family. As to quaternary structure, P0 forms a pentameric complex by interaction with dimers of P1 and P2. Phosphorylated.

The protein localises to the nucleus. Its subcellular location is the cytoplasm. In terms of biological role, ribosomal protein P0 is the functional equivalent of E.coli protein L10. In Gallus gallus (Chicken), this protein is Large ribosomal subunit protein uL10 (RPLP0).